A 770-amino-acid polypeptide reads, in one-letter code: Disabled homolog 2 (770 aa).

Positions 1 to 16 (MSNEVETSATNGQPDQ) are enriched in polar residues. The disordered stretch occupies residues 1-38 (MSNEVETSATNGQPDQQAAPKAPSKKEKKKGPEKTDEY). Position 2 is an N-acetylserine (S2). S2 carries the phosphoserine modification. Positions 45–196 (GDGVKYKAKL…KAVENGSEAL (152 aa)) constitute a PID domain. Y170 bears the Phosphotyrosine mark. S193 bears the Phosphoserine mark. The required for localization to clathrin-coated pits stretch occupies residues 230–447 (ESKDILLVDL…KPGRGRRTAK (218 aa)). Disordered stretches follow at residues 284 to 482 (LNFF…LQPN) and 604 to 629 (VSTQPPSMHSSLLVTPPQPPPRAGPP). 2 short sequence motifs (DPF) span residues 293–295 (DPF) and 298–300 (DPF). Residues 302–313 (QPDQSTPSSFDS) are compositionally biased toward polar residues. 2 positions are modified to phosphoserine; in mitosis: S326 and S328. Over residues 366 to 396 (FSSSQTQPAVRTQNGVSEREQNGFSVKSSPN) the composition is skewed to polar residues. Phosphoserine is present on S401. Composition is skewed to polar residues over residues 407-425 (SIQNGVKQDLESSVQSSPH), 466-480 (PSGQASPTGQPTALQ), and 604-616 (VSTQPPSMHSSLL). Residues 604–732 (VSTQPPSMHS…SLPVTKSTDN (129 aa)) are sufficient for interaction with GRB2. The segment at 619–627 (PPQPPPRAG) is required for interaction with CSK. The interval 649 to 770 (KDVKEMFKDF…YRDPFGNPFA (122 aa)) is required for interaction with MYO6. The required for interaction with GRB2 and CSK stretch occupies residues 663-671 (PPAVPARKG). S675, S723, and S729 each carry phosphoserine. The tract at residues 709–725 (NKINEPPKPAPRQVSLP) is sufficient for interaction with SH3KBP1 SH3 domain. The interval 742 to 770 (SFGSSQASVASSQPVSSEMYRDPFGNPFA) is disordered. Positions 745–758 (SSQASVASSQPVSS) are enriched in low complexity.

As to quaternary structure, interacts (via NPXY motif) with DAB2 (via PID domain). Can interact (via PID domain) with LDLR, APP, APLP1 and APLP2, and weakly with INPP5D (via NPXY motifs); the interaction is impaired by tyrosine phosphorylation of the respective NPXY motifs. Can weakly interact (via PID domain) with LRP1 (via NPXY motif); the interaction is enhanced by tyrosine phosphorylation of the NPXY motif. Interacts with LRP2 (via NPXY motif); the interaction is not affected by tyrosine phosphorylation of the NPXY motif. Interacts with clathrin; in vitro can assemble clathrin triskelia into polyhedral coats. Interacts with AP2A2, ITGB1, ITGB3, ITGB5, PIAS2, DAB2IP, NOSTRIN, FCHO1, DVL3, EPS15, ITSN1 and EPS15L1. Interacts with SH3KBP1 (via SH3 domains). Interacts with GRB2; competes with SOS1 for binding to GRB2 and the interaction is enhanced by EGF and NT-3 stimulation. Interacts with MAP3K7; the interaction is induced by TGF-beta stimulation and may mediate TGF-beta stimulated JNK activation. Interacts with AXIN1 and PPP1CA; the interactions are mutually exclusive. Interacts with the globular tail of MYO6. Interacts (via DPF motifs) with FCHO2; the interaction is direct and required for DAB2-mediated LDLR endocytosis. Interacts with LRP6; the interaction involves LRP6 phosphorylation by CK2 and sequesters LRP6 towards clathrin-mediated endocytosis. Associates with the TGF-beta receptor complex. Interacts with SMAD2 and SMAD3; the interactions are enhanced upon TGF-beta stimulation. Interacts with GRB2; the interaction is enhanced by EGF and NT-3 stimulation. Interacts with SRC; the interaction is enhanced by EGF stimulation. Phosphorylated. Phosphorylation during mitosis is leading to membrane displacement. Expressed in deep invaginations, inclusion cysts and the surface epithelial cells of the ovary. Also expressed in breast epithelial cells, spleen, thymus, prostate, testis, macrophages, fibroblasts, lung epithelial cells, placenta, brain stem, heart and small intestine. Expressed in kidney proximal tubular epithelial cells (at protein level).

The protein localises to the cytoplasm. Its subcellular location is the cytoplasmic vesicle. It is found in the clathrin-coated vesicle membrane. It localises to the membrane. The protein resides in the clathrin-coated pit. Functionally, adapter protein that functions as a clathrin-associated sorting protein (CLASP) required for clathrin-mediated endocytosis of selected cargo proteins. Can bind and assemble clathrin, and binds simultaneously to phosphatidylinositol 4,5-bisphosphate (PtdIns(4,5)P2) and cargos containing non-phosphorylated NPXY internalization motifs, such as the LDL receptor, to recruit them to clathrin-coated pits. Can function in clathrin-mediated endocytosis independently of the AP-2 complex. Involved in endocytosis of integrin beta-1; this function seems to redundant with the AP-2 complex and seems to require DAB2 binding to endocytosis accessory EH domain-containing proteins such as EPS15, EPS15L1 and ITSN1. Involved in endocytosis of cystic fibrosis transmembrane conductance regulator/CFTR. Involved in endocytosis of megalin/LRP2 lipoprotein receptor during embryonal development. Required for recycling of the TGF-beta receptor. Involved in CFTR trafficking to the late endosome. Involved in several receptor-mediated signaling pathways. Involved in TGF-beta receptor signaling and facilitates phosphorylation of the signal transducer SMAD2. Mediates TFG-beta-stimulated JNK activation. May inhibit the canoniocal Wnt/beta-catenin signaling pathway by stabilizing the beta-catenin destruction complex through a competing association with axin preventing its dephosphorylation through protein phosphatase 1 (PP1). Sequesters LRP6 towards clathrin-mediated endocytosis, leading to inhibition of Wnt/beta-catenin signaling. May activate non-canonical Wnt signaling. In cell surface growth factor/Ras signaling pathways proposed to inhibit ERK activation by interrupting the binding of GRB2 to SOS1 and to inhibit SRC by preventing its activating phosphorylation at 'Tyr-419'. Proposed to be involved in modulation of androgen receptor (AR) signaling mediated by SRC activation; seems to compete with AR for interaction with SRC. Plays a role in the CSF-1 signal transduction pathway. Plays a role in cellular differentiation. Involved in cell positioning and formation of visceral endoderm (VE) during embryogenesis and proposed to be required in the VE to respond to Nodal signaling coming from the epiblast. Required for the epithelial to mesenchymal transition, a process necessary for proper embryonic development. May be involved in myeloid cell differentiation and can induce macrophage adhesion and spreading. May act as a tumor suppressor. The sequence is that of Disabled homolog 2 (DAB2) from Homo sapiens (Human).